We begin with the raw amino-acid sequence, 433 residues long: Energy-coupling factor transporter ATP-binding protein EcfA2 (433 aa).

Positions 25-389 (VRVKNLYAVY…QHIINSTSIQ (365 aa)) constitute an ABC transporter domain. Position 62-69 (62-69 (GNSGSGKS)) interacts with ATP.

It belongs to the ABC transporter superfamily. Energy-coupling factor EcfA family. Forms a stable energy-coupling factor (ECF) transporter complex composed of 2 membrane-embedded substrate-binding proteins (S component), 2 ATP-binding proteins (A component) and 2 transmembrane proteins (T component).

Its subcellular location is the cell membrane. In terms of biological role, ATP-binding (A) component of a common energy-coupling factor (ECF) ABC-transporter complex. Unlike classic ABC transporters this ECF transporter provides the energy necessary to transport a number of different substrates. The protein is Energy-coupling factor transporter ATP-binding protein EcfA2 of Ureaplasma parvum serovar 3 (strain ATCC 700970).